A 705-amino-acid polypeptide reads, in one-letter code: Translation factor GUF1 homolog, mitochondrial (705 aa).

The transit peptide at 1-20 directs the protein to the mitochondrion; the sequence is MVCHRYLLGLGASTLCLRRL. Residues 72 to 92 form a disordered region; that stretch reads PVEDNGTTNLTGTGEATSETG. A compositionally biased stretch (polar residues) spans 76–90; sequence NGTTNLTGTGEATSE. One can recognise a tr-type G domain in the interval 105-288; the sequence is NRMRNFCIIA…AVVERIPPPK (184 aa). GTP is bound by residues 114–121, 181–185, and 235–238; these read AHVDHGKS, DTPGH, and NKID.

This sequence belongs to the TRAFAC class translation factor GTPase superfamily. Classic translation factor GTPase family. LepA subfamily.

It localises to the mitochondrion inner membrane. It carries out the reaction GTP + H2O = GDP + phosphate + H(+). In terms of biological role, promotes mitochondrial protein synthesis. May act as a fidelity factor of the translation reaction, by catalyzing a one-codon backward translocation of tRNAs on improperly translocated ribosomes. Binds to mitochondrial ribosomes in a GTP-dependent manner. The chain is Translation factor GUF1 homolog, mitochondrial from Babesia bovis.